Here is a 520-residue protein sequence, read N- to C-terminus: Anthranilate synthase component 1 (520 aa).

Residues Ser40 and Pro291 to Met293 each bind L-tryptophan. Residue Gly328–Thr329 participates in chorismate binding. Glu361 contributes to the Mg(2+) binding site. Chorismate-binding positions include Tyr449, Arg469, Gly483–Gly485, and Gly485. Glu498 contacts Mg(2+).

The protein belongs to the anthranilate synthase component I family. As to quaternary structure, heterotetramer consisting of two non-identical subunits: a beta subunit (TrpG) and a large alpha subunit (TrpE). Mg(2+) is required as a cofactor.

It carries out the reaction chorismate + L-glutamine = anthranilate + pyruvate + L-glutamate + H(+). It participates in amino-acid biosynthesis; L-tryptophan biosynthesis; L-tryptophan from chorismate: step 1/5. Its activity is regulated as follows. Feedback inhibited by tryptophan. Its function is as follows. Part of a heterotetrameric complex that catalyzes the two-step biosynthesis of anthranilate, an intermediate in the biosynthesis of L-tryptophan. In the first step, the glutamine-binding beta subunit (TrpG) of anthranilate synthase (AS) provides the glutamine amidotransferase activity which generates ammonia as a substrate that, along with chorismate, is used in the second step, catalyzed by the large alpha subunit of AS (TrpE) to produce anthranilate. In the absence of TrpG, TrpE can synthesize anthranilate directly from chorismate and high concentrations of ammonia. The chain is Anthranilate synthase component 1 (trpE) from Buchnera aphidicola subsp. Pemphigus spyrothecae.